The sequence spans 923 residues: DNA mismatch repair protein PMS1 (923 aa).

Composition is skewed to basic and acidic residues over residues 543–553 (DMTPSERDSEL), 565–581 (NVER…RFEE), and 591–601 (GDVERVSEDNP). Residues 543 to 603 (DMTPSERDSE…ERVSEDNPRC (61 aa)) form a disordered region.

It belongs to the DNA mismatch repair MutL/HexB family. Heterodimer of MLH1 and PMS1, called MutLalpha, which is the major MMR MutL activity correcting base-base mismatches as well as IDLs. The heterodimer binds double strand DNA independently of a mismatch with positive cooperativity and has more than one DNA binding site. Forms a ternary complex with either the MSH2-MSH6 (MutSalpha) or the MSH2-MSH3 heterodimer (MutSbeta), which recognize and bind to mismatch DNA. Ternary complex formation is promoted by ATP binding. As to expression, expressed at very low levels in mature leaves. Detected in rapidly dividing tissues.

Its subcellular location is the nucleus. Functionally, required for DNA mismatch repair (MMR), correcting base-base mismatches and insertion-deletion loops (IDLs) resulting from DNA replication, DNA damage or from recombination events between non-identical sequences during meiosis. Component of the MutLalpha heterodimer that forms a ternary complex with the MutS heterodimers, which initially recognize the DNA mismatches. This complex is thought to be responsible for directing the downstream MMR events, including strand discrimination, excision, and resynthesis. Plays a major role in maintaining the genetic stability of simple sequence repeats and in the repair of heteroduplex sites present in meiotic recombination intermediates. Does not seem to be required for homologous somatic recombination. This is DNA mismatch repair protein PMS1 (PMS1) from Arabidopsis thaliana (Mouse-ear cress).